The following is a 304-amino-acid chain: N-acetyl-D-glucosamine kinase (304 aa).

ATP-binding positions include 4–11 (GFDIGGTK) and 133–140 (GFGGGLIF). 4 residues coordinate Zn(2+): histidine 157, cysteine 178, cysteine 180, and cysteine 185.

This sequence belongs to the ROK (NagC/XylR) family. NagK subfamily.

It catalyses the reaction N-acetyl-D-glucosamine + ATP = N-acetyl-D-glucosamine 6-phosphate + ADP + H(+). It participates in cell wall biogenesis; peptidoglycan recycling. Its function is as follows. Catalyzes the phosphorylation of N-acetyl-D-glucosamine (GlcNAc) derived from cell-wall degradation, yielding GlcNAc-6-P. The protein is N-acetyl-D-glucosamine kinase of Mannheimia succiniciproducens (strain KCTC 0769BP / MBEL55E).